The following is a 153-amino-acid chain: Ribosome maturation factor RimP (153 aa).

The protein belongs to the RimP family.

Its subcellular location is the cytoplasm. Its function is as follows. Required for maturation of 30S ribosomal subunits. This Nostoc sp. (strain PCC 7120 / SAG 25.82 / UTEX 2576) protein is Ribosome maturation factor RimP.